The following is a 213-amino-acid chain: mRNA-decapping protein OPG121 (213 aa).

2 residues coordinate N(7)-methyl-GTP: glutamate 16 and arginine 50. Residues 30–209 (KDTHVFAACI…EYLSYIYNIL (180 aa)) form the Nudix hydrolase domain. Positions 111–132 (GKLDKKESIKDCLRRELKEESD) match the Nudix box motif. The Mg(2+) site is built by glutamate 126 and glutamate 130. Aspartate 151 provides a ligand contact to N(7)-methyl-GTP. Glutamate 183 provides a ligand contact to Mg(2+).

The protein belongs to the Nudix hydrolase family. As to quaternary structure, interacts with the late transcription elongation factor VLTF-4/OPG110. Interacts with the late transcription factors VLTF-1. Mg(2+) is required as a cofactor. It depends on Mn(2+) as a cofactor.

It catalyses the reaction a 5'-end (N(7)-methyl 5'-triphosphoguanosine)-guanosine in mRNA + H2O = a 5'-end phospho-guanosine in mRNA + N(7)-methyl-GDP + 2 H(+). Its function is as follows. Acts with RNA polymerase to initiate transcription from late gene promoters. The chain is mRNA-decapping protein OPG121 (OPG121) from Cynomys gunnisoni (Gunnison's prairie dog).